We begin with the raw amino-acid sequence, 287 residues long: ATP synthase gamma chain (287 aa).

It belongs to the ATPase gamma chain family. As to quaternary structure, F-type ATPases have 2 components, CF(1) - the catalytic core - and CF(0) - the membrane proton channel. CF(1) has five subunits: alpha(3), beta(3), gamma(1), delta(1), epsilon(1). CF(0) has three main subunits: a, b and c.

It is found in the cell inner membrane. Its function is as follows. Produces ATP from ADP in the presence of a proton gradient across the membrane. The gamma chain is believed to be important in regulating ATPase activity and the flow of protons through the CF(0) complex. This is ATP synthase gamma chain from Xanthomonas axonopodis pv. citri (strain 306).